We begin with the raw amino-acid sequence, 257 residues long: 5'-nucleotidase SurE (257 aa).

Residues D8, D9, S39, and N87 each coordinate a divalent metal cation. Positions 234–257 (VSPLTAPHPTTGHEGLAGLAEKYQ) are disordered.

Belongs to the SurE nucleotidase family. A divalent metal cation serves as cofactor.

It localises to the cytoplasm. The catalysed reaction is a ribonucleoside 5'-phosphate + H2O = a ribonucleoside + phosphate. In terms of biological role, nucleotidase that shows phosphatase activity on nucleoside 5'-monophosphates. In Natronomonas pharaonis (strain ATCC 35678 / DSM 2160 / CIP 103997 / JCM 8858 / NBRC 14720 / NCIMB 2260 / Gabara) (Halobacterium pharaonis), this protein is 5'-nucleotidase SurE.